The primary structure comprises 691 residues: DNA ligase (691 aa).

NAD(+) contacts are provided by residues 41–45 (DAEYD), 90–91 (SL), and E130. K132 acts as the N6-AMP-lysine intermediate in catalysis. The NAD(+) site is built by R153, E190, K307, and K331. Positions 425, 428, 443, and 449 each coordinate Zn(2+). The region spanning 610–691 (APQGVLAGKT…LHQLLEGNTQ (82 aa)) is the BRCT domain.

This sequence belongs to the NAD-dependent DNA ligase family. LigA subfamily. Mg(2+) is required as a cofactor. Requires Mn(2+) as cofactor.

It carries out the reaction NAD(+) + (deoxyribonucleotide)n-3'-hydroxyl + 5'-phospho-(deoxyribonucleotide)m = (deoxyribonucleotide)n+m + AMP + beta-nicotinamide D-nucleotide.. In terms of biological role, DNA ligase that catalyzes the formation of phosphodiester linkages between 5'-phosphoryl and 3'-hydroxyl groups in double-stranded DNA using NAD as a coenzyme and as the energy source for the reaction. It is essential for DNA replication and repair of damaged DNA. The chain is DNA ligase from Burkholderia vietnamiensis (strain G4 / LMG 22486) (Burkholderia cepacia (strain R1808)).